The sequence spans 194 residues: Protein DROOPING LEAF (194 aa).

A C4-type zinc finger spans residues 15 to 42 (CTYCNTVLAVGVPCKRLMDTVTVKCGHC). The tract at residues 83 to 103 (LVSPTSNEGSPRAPFVVKPPE) is disordered.

Belongs to the YABBY family.

It is found in the nucleus. Regulates carpel specification in flower development. Severe or intermediate mutation in DL causes complete or partial homeotic conversion of carpels into stamens without affecting the identities of other floral organs. Interacts antagonistically with class B genes and controls floral meristem determinacy. Regulates midrib formation in leaves probably by inducing cell proliferation in the central region of the leaf. The polypeptide is Protein DROOPING LEAF (DL) (Oryza sativa subsp. japonica (Rice)).